The primary structure comprises 145 residues: Putative phosphatidylglycerol/phosphatidylinositol transfer protein DDB_G0282179 (145 aa).

The N-terminal stretch at 1–20 (MIKTILLLLINFMLILIVNG) is a signal peptide. Asn-134 carries an N-linked (GlcNAc...) asparagine glycan.

It belongs to the NPC2 family. As to quaternary structure, monomer.

Its function is as follows. Catalyzes the intermembrane transfer of phosphatidylglycerol and phosphatidylinositol. This Dictyostelium discoideum (Social amoeba) protein is Putative phosphatidylglycerol/phosphatidylinositol transfer protein DDB_G0282179.